Reading from the N-terminus, the 927-residue chain is Dual serine/threonine and tyrosine protein kinase (927 aa).

Residues 1–21 form a disordered region; the sequence is MEADGQSWAGESVSGPGPGGG. The stretch at 393 to 429 forms a coiled coil; that stretch reads RKKENELYESLMNIANRKQEEMKDMIVETLNTMKEEL. In terms of domain architecture, Protein kinase spans 650–904; it reads PKLGQELGRG…PLLGIVQPML (255 aa). Residues 656-664 and K679 contribute to the ATP site; that span reads LGRGQYGVV. D775 functions as the Proton acceptor in the catalytic mechanism.

Belongs to the protein kinase superfamily. Ser/Thr protein kinase family. As to expression, expressed in brain, heart, skeletal muscle, kidney and lung. Expressed in maturing tubular epithelia, with the most prominent expression in the medulla and the papilla. Expressed in thin ascending limb of the loop of Henle and the distal convoluted tubule. Expressed in all layers of transitional ureteric epithelium and in the ureteric smooth-muscle cells (at protein level). Widely expressed. Highly expressed in many brain regions, including in cerebellum, olfactory, hippocampus and cerebral cortex.

The protein localises to the cytoplasm. The protein resides in the cell membrane. Its subcellular location is the apical cell membrane. It localises to the basolateral cell membrane. It is found in the cell junction. The catalysed reaction is L-seryl-[protein] + ATP = O-phospho-L-seryl-[protein] + ADP + H(+). The enzyme catalyses L-threonyl-[protein] + ATP = O-phospho-L-threonyl-[protein] + ADP + H(+). It catalyses the reaction L-tyrosyl-[protein] + ATP = O-phospho-L-tyrosyl-[protein] + ADP + H(+). Its function is as follows. Acts as a positive regulator of ERK phosphorylation downstream of fibroblast growth factor-receptor activation. Involved in the regulation of both caspase-dependent apoptosis and caspase-independent cell death. In the skin, it plays a predominant role in suppressing caspase-dependent apoptosis in response to UV stress in a range of dermal cell types. The chain is Dual serine/threonine and tyrosine protein kinase (Dstyk) from Mus musculus (Mouse).